Reading from the N-terminus, the 147-residue chain is Ubiquitin-conjugating enzyme E2 D2 (147 aa).

One can recognise a UBC core domain in the interval 1 to 147 (MALKRIHKEL…SREWTQKYAM (147 aa)). Catalysis depends on Cys85, which acts as the Glycyl thioester intermediate.

This sequence belongs to the ubiquitin-conjugating enzyme family. In terms of assembly, interacts with SCF (SKP1-CUL1-F-box protein) E3 ubiquitin ligase complex. Interacts with CNOT4 (via RING domain). Interacts with E3 ubiquitin-protein ligases CBLC, PJA1 and PJA2. Interacts with PDZRN3. Interacts with PPP1R11. Interacts with E3 ubiquitin-protein ligase PHF7; the interaction inhibits cleavage of PHF7 and promotes association of the complex with the nucleosome core particle.

The enzyme catalyses S-ubiquitinyl-[E1 ubiquitin-activating enzyme]-L-cysteine + [E2 ubiquitin-conjugating enzyme]-L-cysteine = [E1 ubiquitin-activating enzyme]-L-cysteine + S-ubiquitinyl-[E2 ubiquitin-conjugating enzyme]-L-cysteine.. The catalysed reaction is S-ubiquitinyl-[E1 ubiquitin-activating enzyme]-L-cysteine + [acceptor protein]-L-lysine = [E1 ubiquitin-activating enzyme]-L-cysteine + N(6)-monoubiquitinyl-[acceptor protein]-L-lysine.. The protein operates within protein modification; protein ubiquitination. Functionally, accepts ubiquitin from the E1 complex and catalyzes its covalent attachment to other proteins. In vitro catalyzes 'Lys-48'-linked polyubiquitination. Mediates the selective degradation of short-lived and abnormal proteins. Functions in the E6/E6-AP-induced ubiquitination of p53/TP53. Mediates ubiquitination of PEX5 and SQSTM1 and autoubiquitination of STUB1 and TRAF6. Involved in the signal-induced conjugation and subsequent degradation of NFKBIA, FBXW2-mediated GCM1 ubiquitination and degradation, MDM2-dependent degradation of p53/TP53 and the activation of MAVS in the mitochondria by RIGI in response to viral infection. Essential for viral activation of IRF3. The sequence is that of Ubiquitin-conjugating enzyme E2 D2 (UBE2D2) from Sus scrofa (Pig).